We begin with the raw amino-acid sequence, 163 residues long: 6,7-dimethyl-8-ribityllumazine synthase (163 aa).

Residues phenylalanine 22, 56-58 (TFE), and 80-82 (AVI) contribute to the 5-amino-6-(D-ribitylamino)uracil site. 85–86 (GT) lines the (2S)-2-hydroxy-3-oxobutyl phosphate pocket. The Proton donor role is filled by histidine 88. Methionine 113 contacts 5-amino-6-(D-ribitylamino)uracil. (2S)-2-hydroxy-3-oxobutyl phosphate is bound at residue arginine 127.

The protein belongs to the DMRL synthase family.

It carries out the reaction (2S)-2-hydroxy-3-oxobutyl phosphate + 5-amino-6-(D-ribitylamino)uracil = 6,7-dimethyl-8-(1-D-ribityl)lumazine + phosphate + 2 H2O + H(+). It participates in cofactor biosynthesis; riboflavin biosynthesis; riboflavin from 2-hydroxy-3-oxobutyl phosphate and 5-amino-6-(D-ribitylamino)uracil: step 1/2. In terms of biological role, catalyzes the formation of 6,7-dimethyl-8-ribityllumazine by condensation of 5-amino-6-(D-ribitylamino)uracil with 3,4-dihydroxy-2-butanone 4-phosphate. This is the penultimate step in the biosynthesis of riboflavin. The polypeptide is 6,7-dimethyl-8-ribityllumazine synthase (Anaeromyxobacter sp. (strain Fw109-5)).